The chain runs to 723 residues: BTB/POZ domain-containing protein 18 (723 aa).

In terms of domain architecture, BTB spans 34–102; the sequence is CDALLQAEGE…LYTSEMEVSQ (69 aa). Disordered stretches follow at residues 150–176, 188–350, and 370–394; these read APIS…PSPL, EGAH…EEGQ, and EPPL…PSGT. Composition is skewed to polar residues over residues 162-174 and 195-205; these read RPQT…QTPS and NLPNADSLSDT. Low complexity-rich tracts occupy residues 217-227 and 271-286; these read QESRSSPSSQR and TSTP…SMPT. 2 stretches are compositionally biased toward basic and acidic residues: residues 303-312 and 327-336; these read QGVDKQKPGE and KPAENKKQSP. Ser414 carries the phosphoserine modification. Positions 603–637 are disordered; sequence TPDLEITSSQPLDGQGEKLLHFDSSDPSQRSYNHL. Positions 617–626 are enriched in basic and acidic residues; sequence QGEKLLHFDS. The segment covering 627–636 has biased composition (polar residues); it reads SDPSQRSYNH. Phosphoserine occurs at positions 682 and 683. The segment at 699–723 is disordered; sequence LGPTSVPSVWPDPSSESETEVDILT. Positions 713 to 723 are enriched in acidic residues; sequence SESETEVDILT.

Expressed in testis.

The protein resides in the nucleus. In terms of biological role, specifically required during spermatogenesis to promote expression of piRNA precursors. The piRNA metabolic process mediates the repression of transposable elements during meiosis by forming complexes composed of piRNAs and Piwi proteins and governs the methylation and subsequent repression of transposons, which is essential for the germline integrity. Acts by facilitating transcription elongation at piRNA loci during pachytene. The sequence is that of BTB/POZ domain-containing protein 18 from Mus musculus (Mouse).